Consider the following 600-residue polypeptide: Glutamine--fructose-6-phosphate aminotransferase [isomerizing] (600 aa).

The active-site Nucleophile; for GATase activity is Cys-2. Positions Cys-2–Asn-217 constitute a Glutamine amidotransferase type-2 domain. 2 SIS domains span residues Ile-283 to Leu-422 and Leu-452 to Pro-590. Residue Lys-595 is the For Fru-6P isomerization activity of the active site.

As to quaternary structure, homodimer.

It localises to the cytoplasm. It catalyses the reaction D-fructose 6-phosphate + L-glutamine = D-glucosamine 6-phosphate + L-glutamate. Functionally, catalyzes the first step in hexosamine metabolism, converting fructose-6P into glucosamine-6P using glutamine as a nitrogen source. This Oceanobacillus iheyensis (strain DSM 14371 / CIP 107618 / JCM 11309 / KCTC 3954 / HTE831) protein is Glutamine--fructose-6-phosphate aminotransferase [isomerizing].